The following is a 508-amino-acid chain: UDP-N-acetylmuramyl-tripeptide synthetase (508 aa).

Serine 35 lines the UDP-N-acetyl-alpha-D-muramoyl-L-alanyl-D-glutamate pocket. 118-124 (GTDGKSS) serves as a coordination point for ATP. UDP-N-acetyl-alpha-D-muramoyl-L-alanyl-D-glutamate contacts are provided by residues 163 to 164 (ST), threonine 190, and arginine 200. Lysine 232 bears the N6-carboxylysine mark.

Belongs to the MurCDEF family. MurE subfamily. Post-translationally, carboxylation is probably crucial for Mg(2+) binding and, consequently, for the gamma-phosphate positioning of ATP.

It localises to the cytoplasm. It functions in the pathway cell wall biogenesis; peptidoglycan biosynthesis. In terms of biological role, catalyzes the addition of an amino acid to the nucleotide precursor UDP-N-acetylmuramoyl-L-alanyl-D-glutamate (UMAG) in the biosynthesis of bacterial cell-wall peptidoglycan. This Borrelia garinii subsp. bavariensis (strain ATCC BAA-2496 / DSM 23469 / PBi) (Borreliella bavariensis) protein is UDP-N-acetylmuramyl-tripeptide synthetase.